The following is a 179-amino-acid chain: Large ribosomal subunit protein uL5 (179 aa).

Belongs to the universal ribosomal protein uL5 family. Part of the 50S ribosomal subunit; part of the 5S rRNA/L5/L18/L25 subcomplex. Contacts the 5S rRNA and the P site tRNA. Forms a bridge to the 30S subunit in the 70S ribosome.

This is one of the proteins that bind and probably mediate the attachment of the 5S RNA into the large ribosomal subunit, where it forms part of the central protuberance. In the 70S ribosome it contacts protein S13 of the 30S subunit (bridge B1b), connecting the 2 subunits; this bridge is implicated in subunit movement. Contacts the P site tRNA; the 5S rRNA and some of its associated proteins might help stabilize positioning of ribosome-bound tRNAs. The chain is Large ribosomal subunit protein uL5 from Pseudomonas syringae pv. tomato (strain ATCC BAA-871 / DC3000).